A 955-amino-acid polypeptide reads, in one-letter code: UvrABC system protein A (955 aa).

35 to 42 (GLSGSGKS) is a binding site for ATP. ABC transporter domains lie at 322-601 (WGST…EESI) and 621-951 (GHDN…RYLK). 654–661 (GVSGSGKS) contributes to the ATP binding site. The segment at 754–780 (CEACQGDGLIKIEMHFLPDVYVKCDIC) adopts a C4-type zinc-finger fold.

It belongs to the ABC transporter superfamily. UvrA family. Forms a heterotetramer with UvrB during the search for lesions.

It is found in the cytoplasm. Functionally, the UvrABC repair system catalyzes the recognition and processing of DNA lesions. UvrA is an ATPase and a DNA-binding protein. A damage recognition complex composed of 2 UvrA and 2 UvrB subunits scans DNA for abnormalities. When the presence of a lesion has been verified by UvrB, the UvrA molecules dissociate. This is UvrABC system protein A from Rickettsia conorii (strain ATCC VR-613 / Malish 7).